We begin with the raw amino-acid sequence, 437 residues long: Chloride intracellular channel protein 5 (437 aa).

The segment covering 1–14 has biased composition (polar residues); sequence MNDENYSTTIYNRV. The disordered stretch occupies residues 1–197; that stretch reads MNDENYSTTI…VSEGNESASA (197 aa). The span at 34–45 shows a compositional bias: basic and acidic residues; that stretch reads DEVHEDVRREDN. Tandem repeats lie at residues 118-125, 126-133, 134-141, and 142-149. Positions 118–149 are 4 X 8 AA tandem repeats of [AGQ]-[SP]-D-[PS]-E-E-P-Q; it reads QSDSEEPQASDPEEPQASDPEEPQGPDPEEPQ. Over residues 121-157 the composition is skewed to acidic residues; that stretch reads SEEPQASDPEEPQASDPEEPQGPDPEEPQENGNEMEA. The segment covering 161–184 has biased composition (polar residues); it reads SPSSFTIQNSRAFSTREISPTSYS. The G-site signature appears at 217 to 220; it reads CPFS. A helical transmembrane segment spans residues 219–239; it reads FSQRLFMILWLKGVVFNVTTV. The GST C-terminal domain occupies 263–427; the sequence is NGDVKTDVNK…AADSEIELAY (165 aa).

This sequence belongs to the chloride channel CLIC family. Component of a multimeric complex consisting of several cytoskeletal proteins, including actin, ezrin, alpha-actinin, gelsolin, and IQGAP1. Interacts with AKAP9. Interacts with TPRN. TPRN, CLIC5 and PTPQR form concentric rings at the base of stereocilia and may form a complex. Interacts with EZR, MYO6 and RDX; the proteins may work together as a complex to stabilize linkages between the plasma membrane and subjacent actin cytoskeleton at the stereocilium base. Post-translationally, phosphorylated. In terms of tissue distribution, expressed in most tissues. Higher levels found in kidney, heart, skeletal muscle, T84 and PANC-1 cells.

It localises to the golgi apparatus. It is found in the cytoplasm. The protein localises to the cytoskeleton. The protein resides in the microtubule organizing center. Its subcellular location is the centrosome. It localises to the cell cortex. It is found in the membrane. The protein localises to the apical cell membrane. The protein resides in the mitochondrion. Its subcellular location is the cell projection. It localises to the stereocilium. It carries out the reaction Na(+)(in) = Na(+)(out). It catalyses the reaction K(+)(in) = K(+)(out). The catalysed reaction is chloride(in) = chloride(out). Its activity is regulated as follows. Inhibited by F-actin. In terms of biological role, in the soluble state, catalyzes glutaredoxin-like thiol disulfide exchange reactions with reduced glutathione as electron donor. Can insert into membranes and form non-selective ion channels almost equally permeable to Na(+), K(+) and Cl(-). Required for normal hearing. It is necessary for the formation of stereocilia in the inner ear and normal development of the organ of Corti. May play a role in the regulation of transepithelial ion absorption and secretion. Is required for the development and/or maintenance of the proper glomerular endothelial cell and podocyte architecture. Plays a role in formation of the lens suture in the eye, which is important for normal optical properties of the lens. The protein is Chloride intracellular channel protein 5 (CLIC5) of Bos taurus (Bovine).